A 581-amino-acid chain; its full sequence is Arginine--tRNA ligase (581 aa).

A 'HIGH' region motif is present at residues 126–136; the sequence is PNLAKEMHVGH.

It belongs to the class-I aminoacyl-tRNA synthetase family. In terms of assembly, monomer.

It localises to the cytoplasm. The enzyme catalyses tRNA(Arg) + L-arginine + ATP = L-arginyl-tRNA(Arg) + AMP + diphosphate. This is Arginine--tRNA ligase from Shewanella sp. (strain ANA-3).